The primary structure comprises 83 residues: Putative defensin-like protein 66 (83 aa).

Residues 1–22 (MGSSRLMITFIVVAMLAISSDL) form the signal peptide. 4 disulfides stabilise this stretch: cysteine 38/cysteine 82, cysteine 42/cysteine 65, cysteine 51/cysteine 80, and cysteine 55/cysteine 81.

It belongs to the DEFL family.

It is found in the secreted. In Arabidopsis thaliana (Mouse-ear cress), this protein is Putative defensin-like protein 66.